Consider the following 188-residue polypeptide: UPF0340 protein SSU98_0310 (188 aa).

This sequence belongs to the UPF0340 family.

This is UPF0340 protein SSU98_0310 from Streptococcus suis (strain 98HAH33).